Reading from the N-terminus, the 198-residue chain is 7-methyl-GTP pyrophosphatase (198 aa).

D69 (proton acceptor) is an active-site residue.

The protein belongs to the Maf family. YceF subfamily. The cofactor is a divalent metal cation.

It is found in the cytoplasm. The enzyme catalyses N(7)-methyl-GTP + H2O = N(7)-methyl-GMP + diphosphate + H(+). Functionally, nucleoside triphosphate pyrophosphatase that hydrolyzes 7-methyl-GTP (m(7)GTP). May have a dual role in cell division arrest and in preventing the incorporation of modified nucleotides into cellular nucleic acids. In Yersinia pseudotuberculosis serotype I (strain IP32953), this protein is 7-methyl-GTP pyrophosphatase.